The sequence spans 203 residues: Chemotactic transduction protein ChpE (203 aa).

5 helical membrane-spanning segments follow: residues 3–23, 46–66, 69–89, 123–143, and 149–169; these read AIFL…GAVF, LIGD…LLGY, VRIP…VQGL, NVVY…GTPN, and VFFA…AALV.

It belongs to the Rht family.

It is found in the cell membrane. The sequence is that of Chemotactic transduction protein ChpE (chpE) from Pseudomonas aeruginosa (strain ATCC 15692 / DSM 22644 / CIP 104116 / JCM 14847 / LMG 12228 / 1C / PRS 101 / PAO1).